The following is a 174-amino-acid chain: UPF0340 protein SH0921 (174 aa).

This sequence belongs to the UPF0340 family.

The chain is UPF0340 protein SH0921 from Staphylococcus haemolyticus (strain JCSC1435).